The following is a 262-amino-acid chain: Pyridoxine 5'-phosphate synthase (262 aa).

Asparagine 6 serves as a coordination point for 3-amino-2-oxopropyl phosphate. 8–9 (DH) lines the 1-deoxy-D-xylulose 5-phosphate pocket. A 3-amino-2-oxopropyl phosphate-binding site is contributed by arginine 17. The active-site Proton acceptor is histidine 43. The 1-deoxy-D-xylulose 5-phosphate site is built by arginine 45 and histidine 50. Glutamate 70 acts as the Proton acceptor in catalysis. Threonine 102 provides a ligand contact to 1-deoxy-D-xylulose 5-phosphate. Histidine 215 acts as the Proton donor in catalysis. Residues glycine 216 and 237-238 (GH) contribute to the 3-amino-2-oxopropyl phosphate site.

The protein belongs to the PNP synthase family. Homooctamer; tetramer of dimers.

The protein resides in the cytoplasm. The catalysed reaction is 3-amino-2-oxopropyl phosphate + 1-deoxy-D-xylulose 5-phosphate = pyridoxine 5'-phosphate + phosphate + 2 H2O + H(+). The protein operates within cofactor biosynthesis; pyridoxine 5'-phosphate biosynthesis; pyridoxine 5'-phosphate from D-erythrose 4-phosphate: step 5/5. Its function is as follows. Catalyzes the complicated ring closure reaction between the two acyclic compounds 1-deoxy-D-xylulose-5-phosphate (DXP) and 3-amino-2-oxopropyl phosphate (1-amino-acetone-3-phosphate or AAP) to form pyridoxine 5'-phosphate (PNP) and inorganic phosphate. The protein is Pyridoxine 5'-phosphate synthase of Helicobacter pylori (strain Shi470).